The chain runs to 426 residues: AP-1 complex subunit mu-1 (426 aa).

Residues 167 to 425 form the MHD domain; sequence KNEVFLDVIE…TQNGTEYSIR (259 aa).

It belongs to the adaptor complexes medium subunit family. As to quaternary structure, adaptor protein complex 1 (AP-1) is a heterotetramer composed of two large adaptins (gamma-type subunit apl4 and beta-type subunit apl2), a medium adaptin (mu-type subunit apm1) and a small adaptin (sigma-type subunit aps1). AP-1 interacts with clathrin. Interacts with sad1.

Its subcellular location is the cytoplasmic vesicle. The protein resides in the clathrin-coated vesicle membrane. It is found in the membrane. The protein localises to the clathrin-coated pit. Component of the adaptor complexes which link clathrin to receptors in coated vesicles. Clathrin-associated protein complexes are believed to interact with the cytoplasmic tails of membrane proteins, leading to their selection and concentration. The polypeptide is AP-1 complex subunit mu-1 (apm1) (Schizosaccharomyces pombe (strain 972 / ATCC 24843) (Fission yeast)).